Reading from the N-terminus, the 302-residue chain is Ornithine carbamoyltransferase (302 aa).

Carbamoyl phosphate-binding positions include 52–55 (STRT), Q79, R103, and 130–133 (HPCQ). Residues N161, D221, and 225–226 (SM) each bind L-ornithine. Residues 261–262 (CL) and R289 each bind carbamoyl phosphate.

It belongs to the aspartate/ornithine carbamoyltransferase superfamily. OTCase family.

It is found in the cytoplasm. The enzyme catalyses carbamoyl phosphate + L-ornithine = L-citrulline + phosphate + H(+). Its pathway is amino-acid biosynthesis; L-arginine biosynthesis; L-arginine from L-ornithine and carbamoyl phosphate: step 1/3. Functionally, reversibly catalyzes the transfer of the carbamoyl group from carbamoyl phosphate (CP) to the N(epsilon) atom of ornithine (ORN) to produce L-citrulline. The polypeptide is Ornithine carbamoyltransferase (Syntrophotalea carbinolica (strain DSM 2380 / NBRC 103641 / GraBd1) (Pelobacter carbinolicus)).